Here is a 271-residue protein sequence, read N- to C-terminus: Shikimate dehydrogenase-like protein HI_0607 (271 aa).

The Proton donor/acceptor role is filled by Lys67. Asp103 contributes to the substrate binding site. NADP(+) is bound by residues 126–130 (GSGGM), Lys154, and Ser184.

This sequence belongs to the shikimate dehydrogenase-like family. Homodimer.

It catalyses the reaction shikimate + NADP(+) = 3-dehydroshikimate + NADPH + H(+). Its function is as follows. In vitro, is able to catalyze the NADP(+)-dependent oxidation of shikimate to 3-dehydroshikimate. However, has much lower activity than classical shikimate dehydrogenases AroE, indicating that shikimate may not be the biological substrate. Cannot utilize NAD(+) instead of NADP(+). Is not able to catalyze the oxidation of quinate. In Haemophilus influenzae (strain ATCC 51907 / DSM 11121 / KW20 / Rd), this protein is Shikimate dehydrogenase-like protein HI_0607.